Consider the following 336-residue polypeptide: Holliday junction branch migration complex subunit RuvB (336 aa).

Positions 1-185 are large ATPase domain (RuvB-L); that stretch reads MSIIVERLLS…FGVLSRVEYY (185 aa). ATP contacts are provided by residues Leu-24, Arg-25, Gly-66, Lys-69, Thr-70, Thr-71, 132-134, Arg-175, Tyr-185, and Arg-222; that span reads EDF. Thr-70 is a Mg(2+) binding site. The interval 186 to 256 is small ATPAse domain (RuvB-S); that stretch reads TVDQLSAIVE…ITQMALELLQ (71 aa). Positions 259–336 are head domain (RuvB-H); sequence KLGLDHIDHK…EHFGMEIPKV (78 aa). Positions 314 and 319 each coordinate DNA.

The protein belongs to the RuvB family. Homohexamer. Forms an RuvA(8)-RuvB(12)-Holliday junction (HJ) complex. HJ DNA is sandwiched between 2 RuvA tetramers; dsDNA enters through RuvA and exits via RuvB. An RuvB hexamer assembles on each DNA strand where it exits the tetramer. Each RuvB hexamer is contacted by two RuvA subunits (via domain III) on 2 adjacent RuvB subunits; this complex drives branch migration. In the full resolvosome a probable DNA-RuvA(4)-RuvB(12)-RuvC(2) complex forms which resolves the HJ.

The protein localises to the cytoplasm. It catalyses the reaction ATP + H2O = ADP + phosphate + H(+). Functionally, the RuvA-RuvB-RuvC complex processes Holliday junction (HJ) DNA during genetic recombination and DNA repair, while the RuvA-RuvB complex plays an important role in the rescue of blocked DNA replication forks via replication fork reversal (RFR). RuvA specifically binds to HJ cruciform DNA, conferring on it an open structure. The RuvB hexamer acts as an ATP-dependent pump, pulling dsDNA into and through the RuvAB complex. RuvB forms 2 homohexamers on either side of HJ DNA bound by 1 or 2 RuvA tetramers; 4 subunits per hexamer contact DNA at a time. Coordinated motions by a converter formed by DNA-disengaged RuvB subunits stimulates ATP hydrolysis and nucleotide exchange. Immobilization of the converter enables RuvB to convert the ATP-contained energy into a lever motion, pulling 2 nucleotides of DNA out of the RuvA tetramer per ATP hydrolyzed, thus driving DNA branch migration. The RuvB motors rotate together with the DNA substrate, which together with the progressing nucleotide cycle form the mechanistic basis for DNA recombination by continuous HJ branch migration. Branch migration allows RuvC to scan DNA until it finds its consensus sequence, where it cleaves and resolves cruciform DNA. This Bacillus cereus (strain ATCC 14579 / DSM 31 / CCUG 7414 / JCM 2152 / NBRC 15305 / NCIMB 9373 / NCTC 2599 / NRRL B-3711) protein is Holliday junction branch migration complex subunit RuvB.